Here is a 165-residue protein sequence, read N- to C-terminus: MYVEMIDETGQVSEDIKKQTLDLLEFAAQKTGKENKEMAVTFVTNERSHELNLEYRDTDRPTDVISLEYKPEVDISFDEEDLAENPELAEMLEDFDSYIGELFISIDKAKEQAEEYGHSYEREMGFLAVHGFLHINGYDHYTPEEEKEMFSLQEEILTAYGLKRQ.

The Zn(2+) site is built by H130, H134, and H140.

This sequence belongs to the endoribonuclease YbeY family. Zn(2+) is required as a cofactor.

It localises to the cytoplasm. Single strand-specific metallo-endoribonuclease involved in late-stage 70S ribosome quality control and in maturation of the 3' terminus of the 16S rRNA. This Streptococcus agalactiae serotype Ia (strain ATCC 27591 / A909 / CDC SS700) protein is Endoribonuclease YbeY.